The chain runs to 120 residues: U-scoloptoxin(16)-Er2a (120 aa).

An N-terminal signal peptide occupies residues 1–26 (MNTVSVVQFLAVGCAVFVLYGRGVFA).

Belongs to the scoloptoxin-16 family. Post-translationally, contains 4 disulfide bonds. In terms of tissue distribution, expressed by the venom gland.

The protein localises to the secreted. This chain is U-scoloptoxin(16)-Er2a, found in Ethmostigmus rubripes (Giant centipede).